Reading from the N-terminus, the 469-residue chain is Sulfate adenylyltransferase subunit 1 (469 aa).

Positions 22–224 (KDLMRFITCG…NMTWYPGSPL (203 aa)) constitute a tr-type G domain. Residues 31-38 (GSVDDGKS) are G1. 31–38 (GSVDDGKS) is a binding site for GTP. Residues 89 to 93 (GITID) form a G2 region. Residues 110 to 113 (DTPG) are G3. Residues 110–114 (DTPGH) and 165–168 (NKMD) each bind GTP. Residues 165–168 (NKMD) are G4. Positions 202 to 204 (SAL) are G5.

This sequence belongs to the TRAFAC class translation factor GTPase superfamily. Classic translation factor GTPase family. CysN/NodQ subfamily. Heterodimer composed of CysD, the smaller subunit, and CysN.

It carries out the reaction sulfate + ATP + H(+) = adenosine 5'-phosphosulfate + diphosphate. The protein operates within sulfur metabolism; hydrogen sulfide biosynthesis; sulfite from sulfate: step 1/3. Functionally, with CysD forms the ATP sulfurylase (ATPS) that catalyzes the adenylation of sulfate producing adenosine 5'-phosphosulfate (APS) and diphosphate, the first enzymatic step in sulfur assimilation pathway. APS synthesis involves the formation of a high-energy phosphoric-sulfuric acid anhydride bond driven by GTP hydrolysis by CysN coupled to ATP hydrolysis by CysD. This is Sulfate adenylyltransferase subunit 1 from Psychromonas ingrahamii (strain DSM 17664 / CCUG 51855 / 37).